The primary structure comprises 298 residues: Probable porphobilinogen deaminase (298 aa).

At Cys241 the chain carries S-(dipyrrolylmethanemethyl)cysteine.

Belongs to the HMBS family. Dipyrromethane serves as cofactor.

The enzyme catalyses 4 porphobilinogen + H2O = hydroxymethylbilane + 4 NH4(+). It participates in porphyrin-containing compound metabolism; protoporphyrin-IX biosynthesis; coproporphyrinogen-III from 5-aminolevulinate: step 2/4. Tetrapolymerization of the monopyrrole PBG into the hydroxymethylbilane pre-uroporphyrinogen in several discrete steps. In Methanopyrus kandleri (strain AV19 / DSM 6324 / JCM 9639 / NBRC 100938), this protein is Probable porphobilinogen deaminase.